The sequence spans 80 residues: Exodeoxyribonuclease 7 small subunit (80 aa).

This sequence belongs to the XseB family. Heterooligomer composed of large and small subunits.

The protein resides in the cytoplasm. It catalyses the reaction Exonucleolytic cleavage in either 5'- to 3'- or 3'- to 5'-direction to yield nucleoside 5'-phosphates.. Functionally, bidirectionally degrades single-stranded DNA into large acid-insoluble oligonucleotides, which are then degraded further into small acid-soluble oligonucleotides. The sequence is that of Exodeoxyribonuclease 7 small subunit from Escherichia coli O6:K15:H31 (strain 536 / UPEC).